Here is an 882-residue protein sequence, read N- to C-terminus: Pentatricopeptide repeat-containing protein At3g03580 (882 aa).

20 PPR repeats span residues 3-37 (TRVSSPFISRALSSSSNLNELRRIHALVISLGLDS), 38-68 (SDFFSGKLIDKYSHFREPASSLSVFRRVSPA), 70-104 (NVYLWNSIIRAFSKNGLFPEALEFYGKLRESKVSP), 105-139 (DKYTFPSVIKACAGLFDAEMGDLVYEQILDMGFES), 140-170 (DLFVGNALVDMYSRMGLLTRARQVFDEMPVR), 171-205 (DLVSWNSLISGYSSHGYYEEALEIYHELKNSWIVP), 206-240 (DSFTVSSVLPAFGNLLVVKQGQGLHGFALKSGVNS), 241-271 (VVVVNNGLVAMYLKFRRPTDARRVFDEMDVR), 272-307 (DSVSYNTMICGYLKLEMVEESVRMFLENLDQFKPDL), 309-340 (TVSSVLRACGHLRDLSLAKYIYNYMLKAGFVL), 341-371 (ESTVRNILIDVYAKCGDMITARDVFNSMECK), 372-406 (DTVSWNSIISGYIQSGDLMEAMKLFKMMMIMEEQA), 407-441 (DHITYLMLISVSTRLADLKFGKGLHSNGIKSGICI), 442-472 (DLSVSNALIDMYAKCGEVGDSLKIFSSMGTG), 473-507 (DTVTWNTVISACVRFGDFATGLQVTTQMRKSEVVP), 508-542 (DMATFLVTLPMCASLAAKRLGKEIHCCLLRFGYES), 543-573 (ELQIGNALIEMYSKCGCLENSSRVFERMSRR), 574-608 (DVVTWTGMIYAYGMYGEGEKALETFADMEKSGIVP), 609-639 (DSVVFIAIIYACSHSGLVDEGLACFEKMKTH), and 645-675 (MIEHYACVVDLLSRSQKISKAEEFIQAMPIK). The segment at 680–755 (IWASVLRACR…NPGYSWIEVG (76 aa)) is type E motif. The type E(+) motif stretch occupies residues 756–786 (KNVHVFSSGDDSAPQSEAIYKSLEILYSLMA). Positions 787–882 (KEGYIPDPRE…DGTCSCKDRW (96 aa)) are type DYW motif.

Belongs to the PPR family. PCMP-H subfamily.

The sequence is that of Pentatricopeptide repeat-containing protein At3g03580 (PCMP-H23) from Arabidopsis thaliana (Mouse-ear cress).